Reading from the N-terminus, the 592-residue chain is Solute carrier family 13 member 2 (592 aa).

Transmembrane regions (helical) follow at residues 13–33 (SYLI…LVPS), 53–73 (ALPL…MGIV), 86–106 (SNLL…WNLH), and 114–134 (LLIV…VTAF). Polar residues predominate over residues 165–177 (SSNVEEGSNNPTF). Residues 165-185 (SSNVEEGSNNPTFELQEPSPQ) form a disordered region. Transmembrane regions (helical) follow at residues 221–241 (MSLC…TGTA), 274–294 (MVIL…GFNF), 324–344 (PMTF…LLWF), 371–391 (GTVA…FPGL), 450–470 (PLQS…VATF), 482–502 (IFLP…LYVM), 511–531 (LAFM…FGDL), and 545–565 (IIGV…LFSL).

Belongs to the SLC13A/DASS transporter (TC 2.A.47) family. NADC subfamily. In terms of tissue distribution, expressed in kidney and intestine. In kidney expressed in the proximal tubule (at protein level).

The protein resides in the apical cell membrane. The enzyme catalyses succinate(out) + 3 Na(+)(out) = succinate(in) + 3 Na(+)(in). It catalyses the reaction fumarate(out) + 3 Na(+)(out) = fumarate(in) + 3 Na(+)(in). It carries out the reaction 2-oxoglutarate(out) + 3 Na(+)(out) = 2-oxoglutarate(in) + 3 Na(+)(in). Li(+) decreases succinate transport in the presence of Na(+), by competing at one of the three cation binding sites. In terms of biological role, low-affinity sodium-dicarboxylate cotransporter, that mediates the entry of citric acid cycle intermediates, such as succinate, citrate, fumarate and alpha-ketoglutarate (2-oxoglutarate) into the small intestine and renal proximal tubule. Transports the dicarboxylate into the cell with a probable stoichiometry of 3 Na(+) for 1 divalent dicarboxylate, rendering the process electrogenic. Citrate is transported in protonated form as a divalent anion, rather than the trivalent form which is normally found in blood. Has a critical role in renal dicarboxylate transport. The sequence is that of Solute carrier family 13 member 2 (SLC13A2) from Homo sapiens (Human).